The following is a 254-amino-acid chain: Protein GltF (254 aa).

Residues 1–25 form the signal peptide; it reads MFFKKNLTTAAICAALSVAAFSAMA. Residues 213–229 form a helical membrane-spanning segment; that stretch reads PVAITAVTFPLLIDAAV.

To E.coli YhcF.

It localises to the cell membrane. Involved in induction of the so-called NTR enzymes in response to nitrogen deprivation, as well as in glutamate biosynthesis. May mediate the glutamate-dependent repression of the GLT operon. The sequence is that of Protein GltF (gltF) from Escherichia coli (strain K12).